The sequence spans 217 residues: MQFWRKQMSEIQHFSQQDIEILGEQTLYEGFFTLKRIQFKHKLFAGGQSGVVTRELLIKGAASAVIAYDPKEDSVILVEQVRIGAAYHPESHRSPWLLELIAGMVEKGEKPEDVALRESEEEAGIQVKNLTHCLSVWDSPGGIVERIHLFAGEVDSAQAKGIHGLAEENEDIKVHVVKREQAYQWMCEGKIDNGIAVIGLQWLQLNYAQLQQSWKRS.

Residues 31 to 32, 54 to 55, and Arg-82 contribute to the substrate site; these read FF and RE. Positions 58-204 constitute a Nudix hydrolase domain; the sequence is IKGAASAVIA…IAVIGLQWLQ (147 aa). Ala-102 is a binding site for Mg(2+). Residues 103-124 carry the Nudix box motif; the sequence is GMVEKGEKPEDVALRESEEEAG. Met-104 is a binding site for substrate. 2 residues coordinate Mg(2+): Glu-118 and Glu-122. Substrate is bound by residues 139–141 and Glu-145; that span reads SPG. Glu-168 functions as the Proton acceptor in the catalytic mechanism. Position 170 (Glu-170) interacts with Mg(2+).

Belongs to the Nudix hydrolase family. NudF subfamily. Requires Mg(2+) as cofactor.

It carries out the reaction ADP-D-ribose + H2O = D-ribose 5-phosphate + AMP + 2 H(+). Functionally, acts on ADP-mannose and ADP-glucose as well as ADP-ribose. Prevents glycogen biosynthesis. The reaction catalyzed by this enzyme is a limiting step of the gluconeogenic process. The sequence is that of ADP-ribose pyrophosphatase (nudF) from Haemophilus influenzae (strain ATCC 51907 / DSM 11121 / KW20 / Rd).